The sequence spans 440 residues: Phosphatidylcholine-sterol acyltransferase (440 aa).

An N-terminal signal peptide occupies residues Met1–Pro24. N-linked (GlcNAc...) asparagine glycosylation occurs at Asn44. A disulfide bond links Cys74 and Cys98. The N-linked (GlcNAc...) asparagine glycan is linked to Asn108. The active-site Nucleophile is Ser205. Asn296 is a glycosylation site (N-linked (GlcNAc...) asparagine). Cys337 and Cys380 are oxidised to a cystine. Active-site charge relay system residues include Asp369 and His401. N-linked (GlcNAc...) asparagine glycosylation occurs at Asn408.

It belongs to the AB hydrolase superfamily. Lipase family. In terms of tissue distribution, detected in blood plasma (at protein level). Highly expressed in liver.

The protein resides in the secreted. It catalyses the reaction a sterol + a 1,2-diacyl-sn-glycero-3-phosphocholine = a sterol ester + a 1-acyl-sn-glycero-3-phosphocholine. The catalysed reaction is a 1-O-alkyl-2-acetyl-sn-glycero-3-phosphocholine + H2O = a 1-O-alkyl-sn-glycero-3-phosphocholine + acetate + H(+). It carries out the reaction a 1-hexadecanoyl-2-acyl-sn-glycero-3-phosphocholine + (24S)-hydroxycholesterol = (24S)-24-hydroxycholesterol ester + 1-hexadecanoyl-sn-glycero-3-phosphocholine. The enzyme catalyses (24S)-hydroxycholesterol + 1-hexadecanoyl-2-(9Z,12Z-octadecadienoyl)-sn-glycero-3-phosphocholine = (24S)-hydroxycholesterol 3-linoleoate + 1-hexadecanoyl-sn-glycero-3-phosphocholine. It catalyses the reaction 1-hexadecanoyl-2-(5Z,8Z,11Z,14Z-eicosatetraenoyl)-sn-glycero-3-phosphocholine + cholesterol = cholesteryl (5Z,8Z,11Z,14Z)-eicosatetraenoate + 1-hexadecanoyl-sn-glycero-3-phosphocholine. The catalysed reaction is 1-hexadecanoyl-2-(9Z-octadecenoyl)-sn-glycero-3-phosphocholine + cholesterol = cholesteryl (9Z-octadecenoate) + 1-hexadecanoyl-sn-glycero-3-phosphocholine. It carries out the reaction 1-hexadecanoyl-2-(8Z,11Z,14Z-eicosatrienoyl)-sn-glycero-3-phosphocholine + cholesterol = cholesteryl (8Z,11Z,14Z)-eicosatrienoate + 1-hexadecanoyl-sn-glycero-3-phosphocholine. The enzyme catalyses 1-hexadecanoyl-2-(5Z,8Z,11Z-eicosatrienoyl)-sn-glycero-3-phosphocholine + cholesterol = cholesteryl (5Z,8Z,11Z)-eicosatrienoate + 1-hexadecanoyl-sn-glycero-3-phosphocholine. It catalyses the reaction 1-hexadecanoyl-2-(5Z,8Z,11Z,14Z,17Z-eicosapentaenoyl)-sn-glycero-3-phosphocholine + cholesterol = (5Z,8Z,11Z,14Z,17Z-eicosapentaenoyl)-cholesterol + 1-hexadecanoyl-sn-glycero-3-phosphocholine. The catalysed reaction is 1-hexadecanoyl-2-(9Z,12Z-octadecadienoyl)-sn-glycero-3-phosphocholine + cholesterol = cholesteryl (9Z,12Z)-octadecadienoate + 1-hexadecanoyl-sn-glycero-3-phosphocholine. It carries out the reaction 1-hexadecanoyl-2-(6Z,9Z,12Z-octadecatrienoyl)-sn-glycero-3-phosphocholine + cholesterol = (6Z,9Z,12Z-octadecatrienoyl)-cholesterol + 1-hexadecanoyl-sn-glycero-3-phosphocholine. The enzyme catalyses 1-hexadecanoyl-2-(11Z,14Z,17Z-eicosatrienoyl)-sn-glycero-3-phosphocholine + cholesterol = (11Z,14Z,17Z-eicosatrienoyl)-cholesterol + 1-hexadecanoyl-sn-glycero-3-phosphocholine. It catalyses the reaction 1-hexadecanoyl-2-(9Z,12Z,15Z-octadecatrienoyl)-sn-glycero-3-phosphocholine + cholesterol = (9Z,12Z,15Z-octadecatrienoyl)-cholesterol + 1-hexadecanoyl-sn-glycero-3-phosphocholine. The catalysed reaction is 1-hexadecanoyl-2-(9Z,12Z-octadecadienoyl)-sn-glycero-3-phosphocholine + H2O = (9Z,12Z)-octadecadienoate + 1-hexadecanoyl-sn-glycero-3-phosphocholine + H(+). It carries out the reaction 1-hexadecanoyl-2-(5Z,8Z,11Z,14Z-eicosatetraenoyl)-sn-glycero-3-phosphocholine + H2O = 1-hexadecanoyl-sn-glycero-3-phosphocholine + (5Z,8Z,11Z,14Z)-eicosatetraenoate + H(+). The enzyme catalyses a 1-O-alkyl-2-acetyl-sn-glycero-3-phosphocholine + 1-hexadecanoyl-sn-glycero-3-phosphocholine = 1-hexadecanoyl-2-acetyl-sn-glycero-3-phosphocholine + a 1-O-alkyl-sn-glycero-3-phosphocholine. Its function is as follows. Central enzyme in the extracellular metabolism of plasma lipoproteins. Synthesized mainly in the liver and secreted into plasma where it converts cholesterol and phosphatidylcholines (lecithins) to cholesteryl esters and lysophosphatidylcholines on the surface of high and low density lipoproteins (HDLs and LDLs). The cholesterol ester is then transported back to the liver. Also produced in the brain by primary astrocytes, and esterifies free cholesterol on nascent APOE-containing lipoproteins secreted from glia and influences cerebral spinal fluid (CSF) APOE- and APOA1 levels. Together with APOE and the cholesterol transporter ABCA1, plays a key role in the maturation of glial-derived, nascent lipoproteins. Required for remodeling high-density lipoprotein particles into their spherical forms. Has a preference for plasma 16:0-18:2 or 18:O-18:2 phosphatidylcholines. Catalyzes the hydrolysis of 1-O-alkyl-2-acetyl-sn-glycero-3-phosphocholine (platelet-activating factor or PAF) to 1-O-alkyl-sn-glycero-3-phosphocholine (lyso-PAF). Also catalyzes the transfer of the acetate group from PAF to 1-hexadecanoyl-sn-glycero-3-phosphocholine forming lyso-PAF. Catalyzes the esterification of (24S)-hydroxycholesterol (24(S)OH-C), also known as cerebrosterol to produce 24(S)OH-C monoesters. In Oryctolagus cuniculus (Rabbit), this protein is Phosphatidylcholine-sterol acyltransferase (LCAT).